The sequence spans 192 residues: Immunoglobulin superfamily member 23 (192 aa).

A disordered region spans residues 1–26 (MRAKPQSPLPRNPVPAWSPPTTTTDP). Residues 7–18 (SPLPRNPVPAWS) are compositionally biased toward pro residues. The region spanning 20 to 128 (PTTTTDPMLE…QLVSEPVTIS (109 aa)) is the Ig-like domain. Asn-64 carries N-linked (GlcNAc...) asparagine glycosylation. The chain crosses the membrane as a helical span at residues 158-178 (LLAAGILGAGALIAGMCFIII).

In terms of tissue distribution, expressed in bone and small intestine. Highly expressed in osteoclasts, and low expressed in osteoblasts and peripheral blood mononuclear cells (PBMCs).

The protein localises to the cell membrane. May be involved in osteoclast differentiation. The protein is Immunoglobulin superfamily member 23 of Homo sapiens (Human).